A 179-amino-acid chain; its full sequence is Large ribosomal subunit protein uL5 (179 aa).

Belongs to the universal ribosomal protein uL5 family. As to quaternary structure, part of the 50S ribosomal subunit; part of the 5S rRNA/L5/L18/L25 subcomplex. Contacts the 5S rRNA and the P site tRNA. Forms a bridge to the 30S subunit in the 70S ribosome.

In terms of biological role, this is one of the proteins that bind and probably mediate the attachment of the 5S RNA into the large ribosomal subunit, where it forms part of the central protuberance. In the 70S ribosome it contacts protein S13 of the 30S subunit (bridge B1b), connecting the 2 subunits; this bridge is implicated in subunit movement. Contacts the P site tRNA; the 5S rRNA and some of its associated proteins might help stabilize positioning of ribosome-bound tRNAs. This is Large ribosomal subunit protein uL5 from Ruthia magnifica subsp. Calyptogena magnifica.